The chain runs to 529 residues: Fibroblast growth factor receptor-like 1 (529 aa).

The first 20 residues, 1-20 (MTRSPALLLLLLGALPSAEA), serve as a signal peptide directing secretion. Residues 21–374 (ARGPPRMADK…SSSSTSLPWP (354 aa)) are Extracellular-facing. 3 Ig-like C2-type domains span residues 25-111 (PRMA…YTLI), 143-233 (PRFT…YKVD), and 242-350 (PVLT…AFLT). A disulfide bridge connects residues C47 and C95. An N-linked (GlcNAc...) asparagine glycan is attached at N107. The disordered stretch occupies residues 116–151 (ISPGKESPGPGGSSGGQEDPASQQWARPRFTQPSKM). An intrachain disulfide couples C168 to C217. 3 N-linked (GlcNAc...) asparagine glycosylation sites follow: N227, N251, and N289. C264 and C334 form a disulfide bridge. The helical transmembrane segment at 375–395 (VVIGIPAGAVFILGTVLLWLC) threads the bilayer. The Cytoplasmic portion of the chain corresponds to 396–529 (QTKKKPCAPA…RIENNGGRVS (134 aa)). A disordered region spans residues 405–427 (ASTLPVPGHRPPGTSRERSGDKD).

As to quaternary structure, interacts with FGF2 with a low affinity. As to expression, highly expressed in the kidney, brain and lung. Weakly expressed in the muscle, thymus, lymph node, stomach, intestine, colon and liver. Expressed in fetal cartilaginous structures like the nasal cartilage, the ribs and the sternum as well as in the cartilaginous rudiments of developing bones such as the vertebrae and the pelvic bone. High expression is found in the muscles of the tongue and the diaphragm.

The protein resides in the cell membrane. Has a negative effect on cell proliferation. In Mus musculus (Mouse), this protein is Fibroblast growth factor receptor-like 1 (Fgfrl1).